Consider the following 225-residue polypeptide: Small ribosomal subunit protein uS3 (225 aa).

One can recognise a KH type-2 domain in the interval 38-106 (IRKFIQSRFS…PVNLNIIEVK (69 aa)).

The protein belongs to the universal ribosomal protein uS3 family. As to quaternary structure, part of the 30S ribosomal subunit. Forms a tight complex with proteins S10 and S14.

Binds the lower part of the 30S subunit head. Binds mRNA in the 70S ribosome, positioning it for translation. The sequence is that of Small ribosomal subunit protein uS3 from Leptospira borgpetersenii serovar Hardjo-bovis (strain JB197).